The primary structure comprises 424 residues: Enolase (424 aa).

A (2R)-2-phosphoglycerate-binding site is contributed by Gln165. Glu207 serves as the catalytic Proton donor. Mg(2+) is bound by residues Asp244, Glu283, and Asp310. The (2R)-2-phosphoglycerate site is built by Lys335, Arg364, Ser365, and Lys386. Lys335 acts as the Proton acceptor in catalysis.

It belongs to the enolase family. It depends on Mg(2+) as a cofactor.

Its subcellular location is the cytoplasm. The protein resides in the secreted. It localises to the cell surface. It catalyses the reaction (2R)-2-phosphoglycerate = phosphoenolpyruvate + H2O. It participates in carbohydrate degradation; glycolysis; pyruvate from D-glyceraldehyde 3-phosphate: step 4/5. Functionally, catalyzes the reversible conversion of 2-phosphoglycerate (2-PG) into phosphoenolpyruvate (PEP). It is essential for the degradation of carbohydrates via glycolysis. This chain is Enolase, found in Chlamydia muridarum (strain MoPn / Nigg).